We begin with the raw amino-acid sequence, 192 residues long: T-cell surface glycoprotein CD3 epsilon chain (192 aa).

An N-terminal signal peptide occupies residues 1-21; the sequence is MQSGNLWRALGLCLLLVGAWA. The Extracellular portion of the chain corresponds to 23-114; sequence DADEQKPYEV…QNCMEVNLME (92 aa). Residues 26–97 enclose the Ig-like domain; sequence EQKPYEVSIS…EGNKEAAHTL (72 aa). An intrachain disulfide couples cysteine 43 to cysteine 84. The N-linked (GlcNAc...) asparagine glycan is linked to asparagine 72. The chain crosses the membrane as a helical span at residues 115–135; that stretch reads VATIIVVDICVTLGLLLLVYY. Topologically, residues 136-192 are cytoplasmic; it reads WSKSRKAKASPMTRGAGAGGRPRGQNKGRPPPVPNPDYEPIRKGQRDLYAGLNQRGV. The segment at 145 to 180 is disordered; the sequence is SPMTRGAGAGGRPRGQNKGRPPPVPNPDYEPIRKGQ. The interval 160–177 is NUMB-binding region; that stretch reads QNKGRPPPVPNPDYEPIR. Residues 163 to 190 enclose the ITAM domain; the sequence is GRPPPVPNPDYEPIRKGQRDLYAGLNQR. Residues 164 to 171 are proline-rich sequence; sequence RPPPVPNP. 2 positions are modified to phosphotyrosine: tyrosine 173 and tyrosine 184.

As to quaternary structure, the TCR-CD3 complex is composed of a CD3D/CD3E and a CD3G/CD3E heterodimers that preferentially associate with TCRalpha and TCRbeta, respectively, to form TCRalpha/CD3E/CD3G and TCRbeta/CD3G/CD3E trimers. In turn, the hexamer interacts with CD3Z homodimer to form the TCR-CD3 complex. Alternatively, TCRalpha and TCRbeta can be replaced by TCRgamma and TCRdelta. Interacts with CD6. Interacts (via Proline-rich sequence) with NCK1; the interaction is ligand dependent but independent of tyrosine kinase activation. Post-translationally, phosphorylated on Tyr residues after T-cell receptor triggering by LCK in association with CD4/CD8.

Its subcellular location is the cell membrane. Functionally, part of the TCR-CD3 complex present on T-lymphocyte cell surface that plays an essential role in adaptive immune response. When antigen presenting cells (APCs) activate T-cell receptor (TCR), TCR-mediated signals are transmitted across the cell membrane by the CD3 chains CD3D, CD3E, CD3G and CD3Z. All CD3 chains contain immunoreceptor tyrosine-based activation motifs (ITAMs) in their cytoplasmic domain. Upon TCR engagement, these motifs become phosphorylated by Src family protein tyrosine kinases LCK and FYN, resulting in the activation of downstream signaling pathways. In addition of this role of signal transduction in T-cell activation, CD3E plays an essential role in correct T-cell development. Also participates in internalization and cell surface down-regulation of TCR-CD3 complexes via endocytosis sequences present in CD3E cytosolic region. In addition to its role as a TCR coreceptor, it serves as a receptor for ITPRIPL1. Ligand recognition inhibits T-cell activation by promoting interaction with NCK1, which prevents CD3E-ZAP70 interaction and blocks the ERK-NFkB signaling cascade and calcium influx. This chain is T-cell surface glycoprotein CD3 epsilon chain (CD3E), found in Bos taurus (Bovine).